We begin with the raw amino-acid sequence, 463 residues long: Retinoic acid receptor RXR-gamma (463 aa).

Residues 1–138 form a modulating region; sequence MYGNYSHFMK…TSPGSLVKHI (138 aa). The tract at residues 18–53 is disordered; it reads SPGHTGSTSMSPSAALSTGKPMDSHPSYTDTPVSAP. Positions 21–33 are enriched in polar residues; the sequence is HTGSTSMSPSAAL. The nuclear receptor DNA-binding region spans 136-211; sequence KHICAICGDR…MGMKREAVQE (76 aa). NR C4-type zinc fingers lie at residues 139-159 and 175-199; these read CAIC…CEGC and CRDN…YQKC. A hinge region spans residues 205–230; it reads KREAVQEERQRSRERAESEAECATSG. Residues 231–459 form the NR LBD domain; the sequence is HEDMPVERIL…TFLMEMLETP (229 aa).

The protein belongs to the nuclear hormone receptor family. NR2 subfamily. As to quaternary structure, homodimer. Heterodimer with a RAR molecule. Binds DNA preferentially as a RAR/RXR heterodimer. Interacts with RARA. Acetylated by EP300. As to expression, expressed in aortic endothelial cells (at protein level).

The protein resides in the nucleus. It localises to the cytoplasm. In terms of biological role, receptor for retinoic acid. Retinoic acid receptors bind as heterodimers to their target response elements in response to their ligands, all-trans or 9-cis retinoic acid, and regulate gene expression in various biological processes. The RAR/RXR heterodimers bind to the retinoic acid response elements (RARE) composed of tandem 5'-AGGTCA-3' sites known as DR1-DR5. The high affinity ligand for RXRs is 9-cis retinoic acid. This chain is Retinoic acid receptor RXR-gamma (RXRG), found in Homo sapiens (Human).